The primary structure comprises 327 residues: Undecaprenyl-phosphate 4-deoxy-4-formamido-L-arabinose transferase (327 aa).

Residues 1 to 235 (MFDAAPIKKV…TCLTTTPLRL (235 aa)) are Cytoplasmic-facing. A helical membrane pass occupies residues 236–256 (LSLLGSVIAIGGFSLSVLLIV). The Periplasmic segment spans residues 257–269 (LRLALGPQWAAEG). A helical membrane pass occupies residues 270 to 290 (VFMLFAVLFTFIGAQFIGMGL). The Cytoplasmic segment spans residues 291 to 327 (LGEYIGRIYNDVRARPRYFVQQVIYPESTPFTEESHQ).

Belongs to the glycosyltransferase 2 family.

It localises to the cell inner membrane. It catalyses the reaction UDP-4-deoxy-4-formamido-beta-L-arabinose + di-trans,octa-cis-undecaprenyl phosphate = 4-deoxy-4-formamido-alpha-L-arabinopyranosyl di-trans,octa-cis-undecaprenyl phosphate + UDP. The protein operates within glycolipid biosynthesis; 4-amino-4-deoxy-alpha-L-arabinose undecaprenyl phosphate biosynthesis; 4-amino-4-deoxy-alpha-L-arabinose undecaprenyl phosphate from UDP-4-deoxy-4-formamido-beta-L-arabinose and undecaprenyl phosphate: step 1/2. Its pathway is bacterial outer membrane biogenesis; lipopolysaccharide biosynthesis. Catalyzes the transfer of 4-deoxy-4-formamido-L-arabinose from UDP to undecaprenyl phosphate. The modified arabinose is attached to lipid A and is required for resistance to polymyxin and cationic antimicrobial peptides. This is Undecaprenyl-phosphate 4-deoxy-4-formamido-L-arabinose transferase from Salmonella agona (strain SL483).